The primary structure comprises 771 residues: Ribonucleoside-diphosphate reductase large subunit (771 aa).

The 92-residue stretch at Met1 to Lys92 folds into the ATP-cone domain. Residues Lys5–Arg6, Glu11–Lys17, Thr53, Asp57, and Lys88 each bind ATP. Residues Ser202 and Ser217 each coordinate GDP. Residues Asp226–Ile228, Lys243, and Arg256 each bind dTTP. Residue Asn427 participates in GDP binding. Catalysis depends on Asn427, which acts as the Proton acceptor. Residue Cys429 is the Cysteine radical intermediate of the active site. GDP is bound by residues Glu431 and Thr603–Thr606. Glu431 serves as the catalytic Proton acceptor.

It belongs to the ribonucleoside diphosphate reductase large chain family. As to quaternary structure, interacts with RNR2/OPG047 subunit. Mg(2+) is required as a cofactor.

The enzyme catalyses a 2'-deoxyribonucleoside 5'-diphosphate + [thioredoxin]-disulfide + H2O = a ribonucleoside 5'-diphosphate + [thioredoxin]-dithiol. Ribonucleoside-diphosphate reductase holoenzyme provides the precursors necessary for viral DNA synthesis. Allows virus growth in non-dividing cells. Catalyzes the biosynthesis of deoxyribonucleotides from the corresponding ribonucleotides. This is Ribonucleoside-diphosphate reductase large subunit (OPG080) from Monkeypox virus.